A 402-amino-acid polypeptide reads, in one-letter code: Major outer membrane porin (402 aa).

A signal peptide spans 1–22 (MKKLLKSALLFAATGSALSLQA).

It belongs to the chlamydial porin (CP) (TC 1.B.2) family. As to quaternary structure, part of a disulfide cross-linked outer membrane complex (COMC) composed of the major outer membrane porin (MOMP), the small cysteine-rich protein (OmcA) and the large cysteine-rich periplasmic protein (OmcB).

The protein localises to the cell outer membrane. Its function is as follows. In elementary bodies (EBs, the infectious stage, which is able to survive outside the host cell) provides the structural integrity of the outer envelope through disulfide cross-links with the small cysteine-rich protein and the large cysteine-rich periplasmic protein. It has been described in publications as the Sarkosyl-insoluble COMC (Chlamydia outer membrane complex), and serves as the functional equivalent of peptidoglycan. It is present but some of the disulfide bonds are reduced in reticulate bodies (RBs). Permits diffusion of specific solutes through the outer membrane. In Chlamydophila psittaci (strain ATCC VR-125 / 6BC) (Chlamydia psittaci), this protein is Major outer membrane porin (ompA).